Here is a 73-residue protein sequence, read N- to C-terminus: uncharacterized protein (73 aa).

The first 23 residues, 1–23 (MLHLIKMVSKIVLLITLVFIVSA), serve as a signal peptide directing secretion.

This is an uncharacterized protein from Acheta domesticus (House cricket).